Here is a 258-residue protein sequence, read N- to C-terminus: 5'-nucleotidase SurE (258 aa).

A divalent metal cation-binding residues include D8, D9, S39, and N95.

The protein belongs to the SurE nucleotidase family. A divalent metal cation is required as a cofactor.

It localises to the cytoplasm. It carries out the reaction a ribonucleoside 5'-phosphate + H2O = a ribonucleoside + phosphate. Its function is as follows. Nucleotidase that shows phosphatase activity on nucleoside 5'-monophosphates. The chain is 5'-nucleotidase SurE from Methanobrevibacter smithii (strain ATCC 35061 / DSM 861 / OCM 144 / PS).